Reading from the N-terminus, the 616-residue chain is Proline--tRNA ligase (616 aa).

The protein belongs to the class-II aminoacyl-tRNA synthetase family. ProS type 1 subfamily. In terms of assembly, homodimer.

Its subcellular location is the cytoplasm. The enzyme catalyses tRNA(Pro) + L-proline + ATP = L-prolyl-tRNA(Pro) + AMP + diphosphate. Functionally, catalyzes the attachment of proline to tRNA(Pro) in a two-step reaction: proline is first activated by ATP to form Pro-AMP and then transferred to the acceptor end of tRNA(Pro). As ProRS can inadvertently accommodate and process non-cognate amino acids such as alanine and cysteine, to avoid such errors it has two additional distinct editing activities against alanine. One activity is designated as 'pretransfer' editing and involves the tRNA(Pro)-independent hydrolysis of activated Ala-AMP. The other activity is designated 'posttransfer' editing and involves deacylation of mischarged Ala-tRNA(Pro). The misacylated Cys-tRNA(Pro) is not edited by ProRS. This is Proline--tRNA ligase from Streptococcus sanguinis (strain SK36).